Reading from the N-terminus, the 899-residue chain is Calcium-transporting ATPase 1 (899 aa).

4 consecutive transmembrane segments (helical) span residues 59–79 (FVKDPLILLLFASSAISVTLG), 80–100 (NIDDAISIALAIVIVVTVGFV), 247–267 (QLSLISLIGIAVIVLVGFFQG), and 282–302 (VAAIPEGLPIIVTVTLALGVL). The active-site 4-aspartylphosphate intermediate is the Asp329. 4 helical membrane-spanning segments follow: residues 688–708 (FQLSTSVAALSLIAISSVFGF), 757–777 (QLLQRVLLSAFIIVTVTIVVF), 827–847 (FNIAVGGSLIGQALVVYASPF), and 854–874 (EAIGLKDVLILLACTSSVLWV). Residue Ser892 is modified to Phosphoserine.

This sequence belongs to the cation transport ATPase (P-type) (TC 3.A.3) family.

It localises to the endoplasmic reticulum membrane. The enzyme catalyses Ca(2+)(in) + ATP + H2O = Ca(2+)(out) + ADP + phosphate + H(+). Transports calcium and manganese ions into the cell. Regulates cell morphogenesis through control of manganese and calcium homeostasis. This Schizosaccharomyces pombe (strain 972 / ATCC 24843) (Fission yeast) protein is Calcium-transporting ATPase 1 (pmr1).